The sequence spans 546 residues: Probable lysosomal cobalamin transporter (546 aa).

A run of 4 helical transmembrane segments spans residues 8–28, 48–68, 102–122, and 141–161; these read LAQG…FSWF, IIAL…IFLV, ILYA…YFFF, and YSIG…FAPL. N-linked (GlcNAc...) asparagine glycosylation occurs at asparagine 167. Transmembrane regions (helical) follow at residues 189–209, 304–324, 352–372, and 407–427; these read TALS…MITY, MVFG…LFIT, IIMV…LLVV, and ALLF…VMLF. N-linked (GlcNAc...) asparagine glycosylation is found at asparagine 444, asparagine 452, and asparagine 459. Residues 495–515 traverse the membrane as a helical segment; it reads VWFFGACYYWGTWLFLVVFMT.

It belongs to the LIMR family. LMBRD1 subfamily.

Its subcellular location is the lysosome membrane. Its function is as follows. Probable lysosomal cobalamin transporter. Required to export cobalamin from lysosomes allowing its conversion to cofactors. The protein is Probable lysosomal cobalamin transporter of Nematostella vectensis (Starlet sea anemone).